A 331-amino-acid polypeptide reads, in one-letter code: Glyceraldehyde-3-phosphate dehydrogenase (331 aa).

NAD(+) contacts are provided by residues 12–13 (RI), D34, R78, and T120. D-glyceraldehyde 3-phosphate-binding positions include 149–151 (SCT), T180, 209–210 (TG), and R232. The Nucleophile role is filled by C150. N314 is an NAD(+) binding site.

Belongs to the glyceraldehyde-3-phosphate dehydrogenase family. In terms of assembly, homotetramer.

It localises to the cytoplasm. It catalyses the reaction D-glyceraldehyde 3-phosphate + phosphate + NAD(+) = (2R)-3-phospho-glyceroyl phosphate + NADH + H(+). It functions in the pathway carbohydrate degradation; glycolysis; pyruvate from D-glyceraldehyde 3-phosphate: step 1/5. Functionally, catalyzes the oxidative phosphorylation of glyceraldehyde 3-phosphate (G3P) to 1,3-bisphosphoglycerate (BPG) using the cofactor NAD. The first reaction step involves the formation of a hemiacetal intermediate between G3P and a cysteine residue, and this hemiacetal intermediate is then oxidized to a thioester, with concomitant reduction of NAD to NADH. The reduced NADH is then exchanged with the second NAD, and the thioester is attacked by a nucleophilic inorganic phosphate to produce BPG. This Shimwellia blattae (strain ATCC 29907 / DSM 4481 / JCM 1650 / NBRC 105725 / CDC 9005-74) (Escherichia blattae) protein is Glyceraldehyde-3-phosphate dehydrogenase (gapA).